We begin with the raw amino-acid sequence, 522 residues long: Protein nucleotidyltransferase YdiU (522 aa).

8 residues coordinate ATP: glycine 109, glycine 111, arginine 112, lysine 132, aspartate 144, glycine 145, arginine 195, and arginine 202. The active-site Proton acceptor is the aspartate 271. Positions 272 and 281 each coordinate Mg(2+). Residue aspartate 281 coordinates ATP.

Belongs to the SELO family. Mg(2+) serves as cofactor. Mn(2+) is required as a cofactor.

It catalyses the reaction L-seryl-[protein] + ATP = 3-O-(5'-adenylyl)-L-seryl-[protein] + diphosphate. The enzyme catalyses L-threonyl-[protein] + ATP = 3-O-(5'-adenylyl)-L-threonyl-[protein] + diphosphate. It carries out the reaction L-tyrosyl-[protein] + ATP = O-(5'-adenylyl)-L-tyrosyl-[protein] + diphosphate. The catalysed reaction is L-histidyl-[protein] + UTP = N(tele)-(5'-uridylyl)-L-histidyl-[protein] + diphosphate. It catalyses the reaction L-seryl-[protein] + UTP = O-(5'-uridylyl)-L-seryl-[protein] + diphosphate. The enzyme catalyses L-tyrosyl-[protein] + UTP = O-(5'-uridylyl)-L-tyrosyl-[protein] + diphosphate. Functionally, nucleotidyltransferase involved in the post-translational modification of proteins. It can catalyze the addition of adenosine monophosphate (AMP) or uridine monophosphate (UMP) to a protein, resulting in modifications known as AMPylation and UMPylation. The polypeptide is Protein nucleotidyltransferase YdiU (Burkholderia lata (strain ATCC 17760 / DSM 23089 / LMG 22485 / NCIMB 9086 / R18194 / 383)).